Consider the following 366-residue polypeptide: 3-dehydroquinate synthase (366 aa).

NAD(+) contacts are provided by residues 71-76 (DGEQYK), 105-109 (GVIGD), 129-130 (TT), Lys-142, Lys-151, and 169-172 (CLQT). 3 residues coordinate Zn(2+): Glu-184, His-248, and His-265.

It belongs to the sugar phosphate cyclases superfamily. Dehydroquinate synthase family. NAD(+) serves as cofactor. Requires Co(2+) as cofactor. The cofactor is Zn(2+).

It is found in the cytoplasm. The catalysed reaction is 7-phospho-2-dehydro-3-deoxy-D-arabino-heptonate = 3-dehydroquinate + phosphate. It functions in the pathway metabolic intermediate biosynthesis; chorismate biosynthesis; chorismate from D-erythrose 4-phosphate and phosphoenolpyruvate: step 2/7. Catalyzes the conversion of 3-deoxy-D-arabino-heptulosonate 7-phosphate (DAHP) to dehydroquinate (DHQ). The chain is 3-dehydroquinate synthase from Photorhabdus laumondii subsp. laumondii (strain DSM 15139 / CIP 105565 / TT01) (Photorhabdus luminescens subsp. laumondii).